Consider the following 341-residue polypeptide: Terpene synthase 9 (341 aa).

The DDxx(x)D/E motif signature appears at 81 to 86 (DDILDS). Positions 222-230 (NDMASYCKE) match the NDxxSxxxD/E motif motif.

Belongs to the terpene synthase family.

The catalysed reaction is (2E,6E)-farnesyl diphosphate = (1S,2S,4R)-beta-elemene + diphosphate. It carries out the reaction (2E,6E)-farnesyl diphosphate = germacrene D + diphosphate. Functionally, terpene synthase that converts its substrate farnesyl diphosphate (FPP) into the sesquiterpenes beta-elemene, germacrene D and a yet unidentified sesquiterpene. The chain is Terpene synthase 9 from Dictyostelium purpureum (Slime mold).